Consider the following 793-residue polypeptide: Phenylalanine--tRNA ligase beta subunit (793 aa).

The region spanning serine 40 to serine 159 is the tRNA-binding domain. One can recognise a B5 domain in the interval asparagine 401–glutamate 476. Aspartate 454, aspartate 460, glutamate 463, and glutamate 464 together coordinate Mg(2+). Positions serine 701 to arginine 793 constitute an FDX-ACB domain.

The protein belongs to the phenylalanyl-tRNA synthetase beta subunit family. Type 1 subfamily. In terms of assembly, tetramer of two alpha and two beta subunits. Mg(2+) is required as a cofactor.

The protein localises to the cytoplasm. The catalysed reaction is tRNA(Phe) + L-phenylalanine + ATP = L-phenylalanyl-tRNA(Phe) + AMP + diphosphate + H(+). The sequence is that of Phenylalanine--tRNA ligase beta subunit from Mesoplasma florum (strain ATCC 33453 / NBRC 100688 / NCTC 11704 / L1) (Acholeplasma florum).